A 394-amino-acid polypeptide reads, in one-letter code: Ceramide glucosyltransferase-B (394 aa).

Residues 1-10 (MAVLDLALQG) lie on the Lumenal side of the membrane. Residues 11–32 (LAIFGCILFFVLWFMHFLSIVY) form a helical membrane-spanning segment. The Cytoplasmic portion of the chain corresponds to 33–195 (TRLHLNKKVS…QVYFGTSHPR (163 aa)). A short sequence motif (D1) is located at residue D92. Residue D144 is a short sequence motif, D2. A helical membrane pass occupies residues 196 to 215 (SYISANVTGIKCVTGMSCLM). Over 216–287 (RKEVLDQAGG…KLRINMLPAT (72 aa)) the chain is Lumenal. Position 236 (D236) is a short sequence motif, D3. The active-site Proton acceptor is the D236. A (Q/R)XXRW motif is present at residues 272-276 (RMIRW). The chain crosses the membrane as a helical span at residues 288–304 (IICEPISECFVASLIIG). Residues 305–309 (WAAHH) lie on the Cytoplasmic side of the membrane. A helical membrane pass occupies residues 310–328 (IFRWDIMVFFMCHCLAWFI). Residues 329–348 (FDYIQLRGVQGGPLNFSKLD) are Lumenal-facing. The helical transmembrane segment at 349–369 (YAVAWFIRESMTIYIFLSALW) threads the bilayer. Over 370–394 (DPTISWRTGRYRLRCGGTAEEILDV) the chain is Cytoplasmic.

The protein belongs to the glycosyltransferase 2 family.

It localises to the golgi apparatus membrane. The enzyme catalyses an N-acylsphing-4-enine + UDP-alpha-D-glucose = a beta-D-glucosyl-(1&lt;-&gt;1')-N-acylsphing-4-enine + UDP + H(+). The catalysed reaction is UDP-alpha-D-xylose + an N-acylsphing-4-enine = a beta-D-xylosyl-(1&lt;-&gt;1')-N-acylsphing-4-enine + UDP + H(+). It carries out the reaction N-(9Z-octadecenoyl)-sphing-4-enine + UDP-alpha-D-xylose = beta-D-xylosyl-(1&lt;-&gt;1')-N-(9Z-octadecenoyl)-sphing-4-enine + UDP + H(+). It participates in lipid metabolism; sphingolipid metabolism. Functionally, participates in the initial step of the glucosylceramide-based glycosphingolipid/GSL synthetic pathway at the cytosolic surface of the Golgi. Catalyzes the transfer of glucose from UDP-glucose to ceramide to produce glucosylceramide/GlcCer (such as beta-D-glucosyl-(1&lt;-&gt;1')-N-acylsphing-4-enine). Glucosylceramide is the core component of glycosphingolipids/GSLs, amphipathic molecules consisting of a ceramide lipid moiety embedded in the outer leaflet of the membrane, linked to one of hundreds of different externally oriented oligosaccharide structures. Glycosphingolipids are essential components of membrane microdomains that mediate membrane trafficking and signal transduction. They are implicated in many fundamental cellular processes, including growth, differentiation, migration, morphogenesis, cell-to-cell and cell-to-matrix interactions. Catalyzes the synthesis of xylosylceramide/XylCer (such as beta-D-xylosyl-(1&lt;-&gt;1')-N-acylsphing-4-enine) using UDP-Xyl as xylose donor. The chain is Ceramide glucosyltransferase-B (ugcg-b) from Xenopus laevis (African clawed frog).